The following is a 137-amino-acid chain: Basic phospholipase A2 PeBP(R)-I/II (137 aa).

Residues 1 to 16 form the signal peptide; that stretch reads MRTLWIMAVLLLGVEG. Disulfide bonds link C42–C131, C44–C60, C59–C111, C65–C137, C66–C104, C73–C97, and C91–C102. Residue H63 is part of the active site. Residue D105 is part of the active site.

It belongs to the phospholipase A2 family. Group II subfamily. R49 sub-subfamily. As to expression, expressed by the venom gland.

The protein localises to the secreted. It catalyses the reaction a 1,2-diacyl-sn-glycero-3-phosphocholine + H2O = a 1-acyl-sn-glycero-3-phosphocholine + a fatty acid + H(+). Its function is as follows. Snake venom phospholipases A2 that have myotoxic, and edema-inducing activity, as well as extremely weak lipolytic activity. PLA2 catalyzes the calcium-dependent hydrolysis of the 2-acyl groups in 3-sn-phosphoglycerides. This chain is Basic phospholipase A2 PeBP(R)-I/II, found in Protobothrops elegans (Elegant pitviper).